The following is a 452-amino-acid chain: uncharacterized protein (452 aa).

The protein belongs to the HypE family.

This is an uncharacterized protein from Methanocaldococcus jannaschii (strain ATCC 43067 / DSM 2661 / JAL-1 / JCM 10045 / NBRC 100440) (Methanococcus jannaschii).